The chain runs to 2812 residues: Zonadhesin (2812 aa).

The N-terminal stretch at 1-17 is a signal peptide; sequence MVPPVWTLLLLVGAALF. The Extracellular portion of the chain corresponds to 18–2757; that stretch reads RKEKPPDQKL…DAPPPRKPAS (2740 aa). MAM domains are found at residues 39–204, 209–368, and 371–536; these read TQCD…SCNR, QTCS…PCGE, and PQCD…TCPV. Positions 61-84 are disordered; the sequence is EDWVRASGPSPTGSTGAPGGYPNG. Residues 66-75 are compositionally biased toward low complexity; it reads ASGPSPTGST. N-linked (GlcNAc...) asparagine glycosylation is found at asparagine 333 and asparagine 493. Disordered stretches follow at residues 545 to 884 and 904 to 929; these read VSPV…PTEK and EKPT…KPTI. The span at 547–558 shows a compositional bias: low complexity; sequence PVSSTGPSETTG. A compositionally biased stretch (polar residues) spans 559–570; sequence LTENPTISTKKP. The 66 X heptapeptide repeats (approximate) (mucin-like domain) stretch occupies residues 573–1041; it reads SIEKPSVTTE…GTTTTSRSST (469 aa). 5 stretches are compositionally biased toward low complexity: residues 592–603, 651–675, 713–842, 853–868, and 916–929; these read TIPTEKPTISTE, TEKP…MEEP, SPEK…STEK, STEK…TISP, and STEK…KPTI. Residues 1044–1093 enclose the TIL 1 domain; it reads CPPNARYESCACPASCKSPRPSCGPLCREGCVCNPGFLFSDNHCIQASSC. A VWFC 1 domain is found at 1103–1148; that stretch reads EPGAEWFSPNCTEHCRCWPGSRVECQISQCGTHTVCQLKNGQYGCH. Residues asparagine 1112 and asparagine 1188 are each glycosylated (N-linked (GlcNAc...) asparagine). Residues 1154 to 1331 enclose the VWFD 1 domain; sequence ATCLVYGDPH…TDQDEDQECQ (178 aa). 2 disulfide bridges follow: cysteine 1156–cysteine 1291 and cysteine 1178–cysteine 1330. Over residues 1302 to 1316 the composition is skewed to basic and acidic residues; sequence HLKLDGSPAGDKEEL. The disordered stretch occupies residues 1302–1323; that stretch reads HLKLDGSPAGDKEELGNSWQTD. Positions 1426-1479 constitute a TIL 2 domain; it reads CPPNSKYSLCAKPCPDTCHSGFSGMFCSDRCVEACECNPGFVLSGLECIPRSQC. Residues 1480-1535 enclose the VWFC 2 domain; that stretch reads GCLHPAGSYFKVGERWYKPGCKELCVCESNNRIRCQPWRCRAQEFCGQQDGIYGCH. Residues 1540–1720 form the VWFD 2 domain; that stretch reads ATCTASGDPH…LPESSEPGCF (181 aa). 2 cysteine pairs are disulfide-bonded: cysteine 1542/cysteine 1680 and cysteine 1564/cysteine 1719. Residues asparagine 1685 and asparagine 1804 are each glycosylated (N-linked (GlcNAc...) asparagine). The 56-residue stretch at 1812–1867 folds into the TIL 3 domain; sequence CPPGSSYSPCSSPCPDTCSSINNPRDCPKALPCAESCECQKGHILSGTSCVPLGQC. A VWFC 3 domain is found at 1868-1924; the sequence is GCTDPAGSYHPVGERWYTENTCTRLCTCSVHNNITCFQSTCKPNQICWALDGLLHCR. Residues asparagine 1900 and asparagine 1946 are each glycosylated (N-linked (GlcNAc...) asparagine). The VWFD 3 domain occupies 1929 to 2108; the sequence is GVCQLPGESH…KDKDIDPSCQ (180 aa). 2 disulfides stabilise this stretch: cysteine 1931–cysteine 2069 and cysteine 1953–cysteine 2107. N-linked (GlcNAc...) asparagine glycosylation is present at asparagine 2203. The TIL 4 domain maps to 2211–2267; sequence CPAYSSYTNCLPSCSPSCWDLDGRCEGAKVPSACAEGCICQPGYVLSEDKCVPRSQC. A VWFC 4 domain is found at 2268–2329; that stretch reads GCKDAHGGSI…NSNCVSDKSE (62 aa). Residues 2329-2505 enclose the VWFD 4 domain; the sequence is EQCSVYGDPR…SWEVKTEDAL (177 aa). A disulfide bond links cysteine 2331 and cysteine 2468. Residues asparagine 2542 and asparagine 2701 are each glycosylated (N-linked (GlcNAc...) asparagine). The 146-residue stretch at 2652-2797 folds into the VWFC 5 domain; it reads CGCTSNGIYY…KREKTQEGDR (146 aa). Residues 2708 to 2744 enclose the EGF-like domain; it reads PESPCLQNPCQNDGQCREQGATFTCECEVGYGGGLCM. 3 disulfides stabilise this stretch: cysteine 2712–cysteine 2723, cysteine 2717–cysteine 2732, and cysteine 2734–cysteine 2743. The chain crosses the membrane as a helical span at residues 2758–2778; sequence NLVGVLLGLLVPVVVVLLAVT. Residues 2779-2812 lie on the Cytoplasmic side of the membrane; sequence RECIYRTRRKREKTQEGDRLARLVDTDTVLDCAC.

Probably forms covalent oligomers. In terms of tissue distribution, in testis, primarily in haploid spermatids.

The protein resides in the cell membrane. Its function is as follows. Binds in a species-specific manner to the zona pellucida of the egg. May be involved in gamete recognition and/or signaling. This Homo sapiens (Human) protein is Zonadhesin (ZAN).